The chain runs to 356 residues: Na(+)/H(+) exchange regulatory cofactor NHE-RF1 (356 aa).

N-acetylserine is present on S2. A phosphoserine mark is found at S2 and S46. Residues 14-94 (LCCLEKGPNG…AVRLLVVDPE (81 aa)) enclose the PDZ 1 domain. Residues 113 to 142 (AQEKSEHTEPPAAADTKKAGDQNEAEKSHL) are disordered. The PDZ 2 domain maps to 151 to 231 (LCTMKKGPNG…EAKLLVVDKE (81 aa)). The interval 265–356 (NSREALVEPA…SKKNELFSNL (92 aa)) is disordered. S266, S277, S287, and S288 each carry phosphoserine. Low complexity predominate over residues 272 to 288 (EPASESPRPALARSASS). Residue T290 is modified to Phosphothreonine. 2 positions are modified to phosphoserine: S291 and S299. Residues 307–317 (EPSSTSSSSDP) are compositionally biased toward low complexity. Residues 346–356 (WSKKNELFSNL) show a composition bias toward basic and acidic residues.

As to quaternary structure, homodimer, and heterodimer with NHERF2. Binds the N-termini of EZR, RDX and MSN. Binds the C-termini of PDGFRA, PDGFRB, ADRB2, NOS2 and CFTR. Binds ARHGAP17, EPI64, RACK1, OPRK1, GNAQ, CTNNB1 and PLCB3. Binds PDZK1. Interacts with CLCN3. Binds the C-terminus of PAG1. In resting T-cells, part of a PAG1-NHERF1-MSN complex which is disrupted upon TCR activation. Forms a complex with CFTR and SLC4A7. Forms a complex with SLC4A7 and ATP6V1B1. Interacts with TRPC4 (via the PDZ-binding domain). Directly interacts with HTR4. Interacts (via the PDZ 1 domain) with PODXL (via the C-terminal PDZ-binding motif DTHL); interaction is not detected in glomerular epithelium cells. Interacts (via the PDZ 1 domain) with PODXL (via the C-terminal PDZ-binding motif DTHL); the interaction take place early in the secretory pathway and is necessary for its apical membrane sorting. Interacts with SLC26A3. Interacts with MCC. Interacts with SLC34A1. Interacts (via the PDZ domains) with SLC26A6 isoform 4 and isoform 5. Interacts (via PDZ domains) with ACE2 (via PDZ-binding motif); the interaction may enhance ACE2 membrane residence.

The protein localises to the cytoplasm. It localises to the apical cell membrane. The protein resides in the cell projection. It is found in the filopodium. Its subcellular location is the ruffle. The protein localises to the microvillus. It localises to the endomembrane system. Functionally, scaffold protein that connects plasma membrane proteins with members of the ezrin/moesin/radixin family and thereby helps to link them to the actin cytoskeleton and to regulate their surface expression. Necessary for recycling of internalized ADRB2. Was first known to play a role in the regulation of the activity and subcellular location of SLC9A3. Necessary for cAMP-mediated phosphorylation and inhibition of SLC9A3. Involved in sperm capacitation. May participate in the regulation of the chloride and bicarbonate homeostasis in spermatozoa. May enhance Wnt signaling. May participate in HTR4 targeting to microvilli. Involved in the regulation of phosphate reabsorption in the renal proximal tubules. This Rattus norvegicus (Rat) protein is Na(+)/H(+) exchange regulatory cofactor NHE-RF1 (Nherf1).